We begin with the raw amino-acid sequence, 483 residues long: Glutathione reductase (483 aa).

Met-1 bears the N-acetylmethionine mark. Leu-2 carries the post-translational modification N-acetylserine. Residues Ser-33 and Gly-34 each contribute to the FAD site. Ser-33 serves as a coordination point for glutathione. Arg-40 contacts glutathione. Residues Glu-53, Thr-60, Cys-61, and Lys-69 each contribute to the FAD site. Cys-61 and Cys-66 are disulfide-bonded. Tyr-123 lines the glutathione pocket. Ala-139 lines the FAD pocket. 5 residues coordinate NADP(+): Ala-205, Ile-208, Glu-211, Arg-228, and Arg-234. Thr-243 is a glutathione binding site. N-linked (GlcNAc...) asparagine glycosylation occurs at Asn-278. Gly-294 contributes to the NADP(+) binding site. Asp-334 is an FAD binding site. NADP(+) is bound at residue Glu-340. Thr-342 is an FAD binding site. Arg-350 contacts glutathione. Val-375 is an NADP(+) binding site. Lys-425 serves as a coordination point for glutathione. His-472 contacts FAD. His-472 serves as the catalytic Proton acceptor.

Belongs to the class-I pyridine nucleotide-disulfide oxidoreductase family. As to quaternary structure, homodimer. The cofactor is FAD.

It is found in the cytoplasm. Its subcellular location is the nucleus. The protein resides in the mitochondrion. The protein localises to the peroxisome. It carries out the reaction 2 glutathione + NADP(+) = glutathione disulfide + NADPH + H(+). Its function is as follows. Catalyzes the reduction of glutathione disulfide (GSSG) to reduced glutathione (GSH). Constitutes the major mechanism to maintain a high GSH:GSSG ratio in the cytosol. This is Glutathione reductase from Saccharomyces cerevisiae (strain ATCC 204508 / S288c) (Baker's yeast).